The primary structure comprises 530 residues: UDP-glucuronosyltransferase 2B17 (530 aa).

The N-terminal stretch at 1–23 (MPGKWISALLLLQISCCFQSGNC) is a signal peptide. Residues 494-510 (VIGFLLTCSAVIAVLTV) form a helical membrane-spanning segment.

The protein belongs to the UDP-glycosyltransferase family.

Its subcellular location is the endoplasmic reticulum membrane. The enzyme catalyses glucuronate acceptor + UDP-alpha-D-glucuronate = acceptor beta-D-glucuronoside + UDP + H(+). The catalysed reaction is 17alpha-estradiol + UDP-alpha-D-glucuronate = 17alpha-estradiol 3-O-(beta-D-glucuronate) + UDP + H(+). It carries out the reaction 17alpha-estradiol + UDP-alpha-D-glucuronate = 17alpha-estradiol 17-O-(beta-D-glucuronate) + UDP + H(+). It catalyses the reaction 17beta-estradiol + UDP-alpha-D-glucuronate = 17beta-estradiol 17-O-(beta-D-glucuronate) + UDP + H(+). The enzyme catalyses 17beta-hydroxy-5alpha-androstan-3-one + UDP-alpha-D-glucuronate = 5alpha-dihydrotestosterone 17-O-(beta-D-glucuronate) + UDP + H(+). The catalysed reaction is testosterone + UDP-alpha-D-glucuronate = testosterone 17-O-(beta-D-glucuronate) + UDP + H(+). Functionally, UDP-glucuronosyltransferase (UGT) that catalyzes phase II biotransformation reactions in which lipophilic substrates are conjugated with glucuronic acid to increase the metabolite's water solubility, thereby facilitating excretion into either the urine or bile. Catalyzes the glucuronidation of endogenous steroid hormones such as androgens (epitestosterone, androsterone) and estrogens (estradiol, epiestradiol). The polypeptide is UDP-glucuronosyltransferase 2B17 (Rattus norvegicus (Rat)).